The chain runs to 164 residues: NADH-quinone oxidoreductase subunit I 2 (164 aa).

2 4Fe-4S ferredoxin-type domains span residues 39 to 71 (IVLTRDPDGQERCVACNLCAAACPVDCIDVVKA) and 81 to 110 (ESFRINFARCIFCGYCEEACPTSAIQLTPD). [4Fe-4S] cluster contacts are provided by Cys-51, Cys-54, Cys-57, Cys-61, Cys-90, Cys-93, Cys-96, and Cys-100.

This sequence belongs to the complex I 23 kDa subunit family. In terms of assembly, NDH-1 is composed of 14 different subunits. Subunits NuoA, H, J, K, L, M, N constitute the membrane sector of the complex. Requires [4Fe-4S] cluster as cofactor.

It is found in the cell inner membrane. The enzyme catalyses a quinone + NADH + 5 H(+)(in) = a quinol + NAD(+) + 4 H(+)(out). NDH-1 shuttles electrons from NADH, via FMN and iron-sulfur (Fe-S) centers, to quinones in the respiratory chain. The immediate electron acceptor for the enzyme in this species is believed to be ubiquinone. Couples the redox reaction to proton translocation (for every two electrons transferred, four hydrogen ions are translocated across the cytoplasmic membrane), and thus conserves the redox energy in a proton gradient. In Cereibacter sphaeroides (strain ATCC 17023 / DSM 158 / JCM 6121 / CCUG 31486 / LMG 2827 / NBRC 12203 / NCIMB 8253 / ATH 2.4.1.) (Rhodobacter sphaeroides), this protein is NADH-quinone oxidoreductase subunit I 2.